Here is a 57-residue protein sequence, read N- to C-terminus: uncharacterized protein (57 aa).

A helical membrane pass occupies residues 34–51 (TALLDAAAVVVVPGLLAA).

Its subcellular location is the membrane. This is an uncharacterized protein from Dictyostelium discoideum (Social amoeba).